The sequence spans 1977 residues: Voltage-dependent L-type calcium channel subunit alpha-1F (1977 aa).

Positions 1 to 11 are enriched in basic and acidic residues; that stretch reads MSESEGGKDTT. Residues 1-60 form a disordered region; that stretch reads MSESEGGKDTTPEPSPANGAGPGPEWGLCPGPPAVEGESSGASGLGTPKRRNQHSKHKTV. Residues 1–92 are Cytoplasmic-facing; it reads MSESEGGKDT…RSCISIVEWK (92 aa). Basic residues predominate over residues 48–59; it reads PKRRNQHSKHKT. One copy of the I repeat lies at 79–375; sequence NPLRRSCISI…LVLGVLSGEF (297 aa). The helical transmembrane segment at 93-111 threads the bilayer; sequence PFDILILLTIFANCVALGV. At 112–129 the chain is on the extracellular side; it reads YIPFPEDDSNTANHNLEQ. A helical transmembrane segment spans residues 130–149; sequence VEYVFLVIFTVETVLKIVAY. Residues 150 to 161 lie on the Cytoplasmic side of the membrane; sequence GLVLHPSAYIRN. Residues 162–180 form a helical membrane-spanning segment; it reads GWNLLDFIIVVVGLFSVLL. At 181 to 201 the chain is on the extracellular side; it reads EQGPGRPGDAPHTGGKPGGFD. A helical membrane pass occupies residues 202 to 220; that stretch reads VKALRAFRVLRPLRLVSGV. Over 221 to 239 the chain is Cytoplasmic; that stretch reads PSLHIVLNSIMKALVPLLH. Residues 240 to 259 form a helical membrane-spanning segment; the sequence is IALLVLFVIIIYAIIGLELF. Residues 260–347 lie on the Extracellular side of the membrane; sequence LGRMHKTCYF…WMQDAMGYEL (88 aa). The N-linked (GlcNAc...) asparagine glycan is linked to Asn295. Position 330 (Glu330) interacts with Ca(2+). The helical transmembrane segment at 348–372 threads the bilayer; it reads PWVYFVSLVIFGSFFVLNLVLGVLS. Residues 373-529 are Cytoplasmic-facing; the sequence is GEFSKEREKA…ARCRRAVKSN (157 aa). The binding to the beta subunit stretch occupies residues 395–412; it reads QQMEEDLRGYLDWITQAE. Disordered regions lie at residues 418–441 and 455–488; these read DPSA…PQLA and SHST…EDEE. Over residues 455 to 469 the composition is skewed to low complexity; it reads SHSTRSTHSTSSHAS. Residues 515–761 form an II repeat; that stretch reads NRVLRARCRR…VFLAIAVDNL (247 aa). A helical transmembrane segment spans residues 530–549; the sequence is ACYWAVLLLVFLNTLTIASE. Topologically, residues 550 to 564 are extracellular; the sequence is HHGQPVWLTQIQEYA. A helical membrane pass occupies residues 565–583; the sequence is NKVLLCLFTVEMLLKLYGL. Over 584 to 591 the chain is Cytoplasmic; sequence GPSAYVSS. A helical transmembrane segment spans residues 592–610; sequence FFNRFDCFVVCGGILETTL. The Extracellular portion of the chain corresponds to 611-620; the sequence is VEVGAMQPLG. A helical transmembrane segment spans residues 621 to 639; it reads ISVLRCVRLLRIFKVTRHW. The Cytoplasmic portion of the chain corresponds to 640 to 658; that stretch reads ASLSNLVASLLNSMKSIAS. A helical transmembrane segment spans residues 659-679; that stretch reads LLLLLFLFIIIFSLLGMQLFG. Residues 680-733 are Extracellular-facing; it reads GKFNFDQTHTKRSTFDTFPQALLTVFQILTGEDWNVVMYDGIMAYGGPFFPGML. Glu711 is a binding site for Ca(2+). The helical transmembrane segment at 734–758 threads the bilayer; the sequence is VCIYFIILFICGNYILLNVFLAIAV. Residues 759–871 lie on the Cytoplasmic side of the membrane; it reads DNLASGDAGT…KGCHTLIHHH (113 aa). The segment at 767–830 is disordered; it reads GTAKDKGGEK…EEEEEGAGGV (64 aa). The span at 768–783 shows a compositional bias: basic and acidic residues; that stretch reads TAKDKGGEKSNEKDLP. Residues 807-826 show a composition bias toward acidic residues; sequence DMEEEEEEEEEEEEEEEEEG. One copy of the III repeat lies at 858-1140; it reads NPLRKGCHTL…IFVGFVIITF (283 aa). A helical transmembrane segment spans residues 872-890; it reads VFTNLILVFIILSSVSLAA. Topologically, residues 891–906 are extracellular; it reads EDPIRAHSFRNHILGY. Residues 907–926 traverse the membrane as a helical segment; that stretch reads FDYAFTSIFTVEILLKMTVF. At 927–938 the chain is on the cytoplasmic side; sequence GAFLHRGSFCRS. Residues 939-957 traverse the membrane as a helical segment; it reads WFNMLDLLVVSVSLISFGI. Over 958 to 963 the chain is Extracellular; sequence HSSAIS. The helical transmembrane segment at 964 to 983 threads the bilayer; the sequence is VVKILRVLRVLRPLRAINRA. Topologically, residues 984 to 1002 are cytoplasmic; the sequence is KGLKHVVQCVFVAIRTIGN. Residues 1003–1022 traverse the membrane as a helical segment; sequence IMIVTTLLQFMFACIGVQLF. Over 1023 to 1112 the chain is Extracellular; that stretch reads KGKFYTCTDE…HGPIYNYRVE (90 aa). Residues 1060-1150 are dihydropyridine binding; it reads RLWVNSDFNF…RAQGEQEYQN (91 aa). Glu1086 provides a ligand contact to Ca(2+). The chain crosses the membrane as a helical span at residues 1113–1133; the sequence is ISVFFIVYIIIIAFFMMNIFV. Residues 1134–1190 are Cytoplasmic-facing; that stretch reads GFVIITFRAQGEQEYQNCELDKNQRQCVEYALKAQPLRRYIPKNPHQYRVWATVNSA. One copy of the IV repeat lies at 1177–1444; the sequence is NPHQYRVWAT…LFVAVIMDNF (268 aa). The helical transmembrane segment at 1191–1209 threads the bilayer; the sequence is AFEYLMFLLILLNTVALAM. Topologically, residues 1210–1224 are extracellular; sequence QHYEQTAPFNYAMDI. The helical transmembrane segment at 1225-1244 threads the bilayer; it reads LNMVFTGLFTIEMVLKIIAF. Residues 1245–1251 lie on the Cytoplasmic side of the membrane; sequence KPKHYFT. Residues 1252–1273 form a helical membrane-spanning segment; it reads DAWNTFDALIVVGSIVDIAVTE. Over 1274–1290 the chain is Extracellular; the sequence is VNNGGHLGESSEDSSRI. A helical transmembrane segment spans residues 1291 to 1310; sequence SITFFRLFRVMRLVKLLSKG. The Cytoplasmic portion of the chain corresponds to 1311-1329; it reads EGIRTLLWTFIKSFQALPY. A helical transmembrane segment spans residues 1330-1349; it reads VALLIAMIFFIYAVIGMQMF. Topologically, residues 1350-1416 are extracellular; sequence GKVALQDGTQ…GEEFTCGSNF (67 aa). The segment at 1397-1463 is dihydropyridine binding; it reads RCDPESDFGP…LGPHHLDEFK (67 aa). The segment at 1409–1452 is phenylalkylamine binding; it reads EFTCGSNFAIAYFISFFMLCAFLIINLFVAVIMDNFDYLTRDWS. Residues 1417-1441 traverse the membrane as a helical segment; the sequence is AIAYFISFFMLCAFLIINLFVAVIM. Topologically, residues 1442–1977 are cytoplasmic; sequence DNFDYLTRDW…GDEMACVHAL (536 aa). Disordered regions lie at residues 1637–1754 and 1816–1841; these read CDTE…EVPD and DLPI…WATP. Residues 1638-1657 are compositionally biased toward acidic residues; sequence DTEEEEEEGQEGVEEEDEKD. Polar residues-rich tracts occupy residues 1661–1670, 1702–1716, 1733–1743, and 1829–1840; these read NKATMVSQPS, TPTS…AGSN, GNSQPKGTKGQ, and SGPNRAQGSWAT.

The protein belongs to the calcium channel alpha-1 subunit (TC 1.A.1.11) family. CACNA1F subfamily. Voltage-dependent calcium channels are multisubunit complexes, consisting of alpha-1, alpha-2, beta and delta subunits in a 1:1:1:1 ratio. The channel activity is directed by the pore-forming and voltage-sensitive alpha-1 subunit. In many cases, this subunit is sufficient to generate voltage-sensitive calcium channel activity. The auxiliary subunits beta and alpha-2/delta linked by a disulfide bridge regulate the channel activity. Interacts (via IQ domain) with CABP4; in a calcium independent manner. As to quaternary structure, interacts with CABP4; suppresses robust calcium-dependent inactivation of channel without enhancing the hyperpolarized voltage-dependent activation. In terms of tissue distribution, expression in skeletal muscle and retina. Isoform 4 is expressed in retina.

Its subcellular location is the membrane. It catalyses the reaction Ca(2+)(in) = Ca(2+)(out). Voltage-sensitive calcium channels (VSCC) mediate the entry of calcium ions into excitable cells and are also involved in a variety of calcium-dependent processes, including muscle contraction, hormone or neurotransmitter release, gene expression, cell motility, cell division and cell death. The isoform alpha-1F gives rise to L-type calcium currents. Long-lasting (L-type) calcium channels belong to the 'high-voltage activated' (HVA) group. They are blocked by dihydropyridines (DHP), phenylalkylamines, and by benzothiazepines. Activates at more negative voltages and does not undergo calcium-dependent inactivation (CDI), due to incoming calcium ions, during depolarization. Its function is as follows. Voltage-dependent L-type calcium channel activates at more hyperpolarized voltages and exhibits a robust calcium-dependent inactivation (CDI), due to incoming calcium ions, during depolarizations. Functionally, voltage-sensitive calcium channels (VSCC) mediate the entry of calcium ions into excitable cells and are also involved in a variety of calcium-dependent processes, including muscle contraction, hormone or neurotransmitter release, gene expression, cell motility, cell division and cell death. The chain is Voltage-dependent L-type calcium channel subunit alpha-1F from Homo sapiens (Human).